The primary structure comprises 82 residues: Small ribosomal subunit protein bS16 (82 aa).

This sequence belongs to the bacterial ribosomal protein bS16 family.

This chain is Small ribosomal subunit protein bS16, found in Histophilus somni (strain 2336) (Haemophilus somnus).